A 354-amino-acid chain; its full sequence is GRAM domain-containing protein 2A (354 aa).

Residues 1–29 are compositionally biased toward polar residues; the sequence is MTALSRSEATEEGGNQQMHRKTASLNSPV. The disordered stretch occupies residues 1–46; the sequence is MTALSRSEATEEGGNQQMHRKTASLNSPVSCKEKPDRVEEPPDYSL. The span at 31 to 40 shows a compositional bias: basic and acidic residues; sequence CKEKPDRVEE. One can recognise a GRAM domain in the interval 72–139; the sequence is QQYHKLFKDV…VSVQMIKKHK (68 aa). The helical transmembrane segment at 312 to 332 threads the bilayer; that stretch reads LLKVFFVLICFLVMSSSYLAF.

The protein resides in the endoplasmic reticulum membrane. It localises to the cell membrane. Functionally, participates in the organization of endoplasmic reticulum-plasma membrane contact sites (EPCS) with pleiotropic functions including STIM1 recruitment and calcium homeostasis. Constitutive tether that co-localize with ESYT2/3 tethers at endoplasmic reticulum-plasma membrane contact sites in a phosphatidylinositol lipid-dependent manner. Pre-marks the subset of phosphtidylinositol 4,5-biphosphate (PI(4,5)P2)-enriched EPCS destined for the store operated calcium entry pathway (SOCE). In Homo sapiens (Human), this protein is GRAM domain-containing protein 2A.